The primary structure comprises 44 residues: Photosystem I reaction center subunit IX (44 aa).

Residues 7–27 (YLSVAPVLSTLWFGALAGLLI) form a helical membrane-spanning segment.

Belongs to the PsaJ family.

It is found in the plastid. Its subcellular location is the chloroplast thylakoid membrane. In terms of biological role, may help in the organization of the PsaE and PsaF subunits. The polypeptide is Photosystem I reaction center subunit IX (Oryza nivara (Indian wild rice)).